A 178-amino-acid chain; its full sequence is Aspartic proteinase nepenthesin-2 (178 aa).

The active site involves Asp-98.

It belongs to the peptidase A1 family.

The protein localises to the secreted. It catalyses the reaction Similar to pepsin, but also cleaves on either side of Asp and at Lys-|-Arg.. With respect to regulation, inhibited by pepstatin and by diazoacetyl-D,L-norleucine methyl ester (DAN) in the presence of Cu(2+) ions. In terms of biological role, extracellular proteinase found in the pitcher fluid of carnivorous plants. Digest prey for nitrogen uptake. The protein is Aspartic proteinase nepenthesin-2 of Nepenthes distillatoria (Pitcher plant).